The primary structure comprises 108 residues: Thioredoxin (108 aa).

The region spanning 2 to 108 is the Thioredoxin domain; it reads SDAILYVSDD…QLTAFLDSQL (107 aa). Cys-33 and Cys-36 form a disulfide bridge.

Belongs to the thioredoxin family.

In terms of biological role, component of the thioredoxin-thioredoxin reductase system. Participates in various redox reactions through the reversible oxidation of its active center dithiol to a disulfide and catalyzes dithiol-disulfide exchange reactions. The protein is Thioredoxin (trxA) of Acidithiobacillus ferridurans.